Reading from the N-terminus, the 237-residue chain is Uridylate kinase (237 aa).

ATP is bound at residue 10-13; that stretch reads KLSG. Gly-52 lines the UMP pocket. 2 residues coordinate ATP: Gly-53 and Arg-57. Residues Asp-72 and 133-140 contribute to the UMP site; that span reads TGNPFFTT. Positions 160, 166, and 169 each coordinate ATP.

It belongs to the UMP kinase family. In terms of assembly, homohexamer.

The protein localises to the cytoplasm. It catalyses the reaction UMP + ATP = UDP + ADP. The protein operates within pyrimidine metabolism; CTP biosynthesis via de novo pathway; UDP from UMP (UMPK route): step 1/1. Inhibited by UTP. Functionally, catalyzes the reversible phosphorylation of UMP to UDP. In Thiobacillus denitrificans (strain ATCC 25259 / T1), this protein is Uridylate kinase.